We begin with the raw amino-acid sequence, 58 residues long: U8-ctenitoxin-Pk1a (58 aa).

Disulfide bonds link Cys2–Cys16, Cys9–Cys22, Cys15–Cys40, Cys24–Cys38, and Cys48–Cys55.

In terms of tissue distribution, expressed by the venom gland.

The protein resides in the secreted. Functionally, no toxic effects on mice at dose levels of 5 ug per mouse. May be toxic to insects. The sequence is that of U8-ctenitoxin-Pk1a from Phoneutria keyserlingi (Brazilian wandering spider).